Here is a 431-residue protein sequence, read N- to C-terminus: Methionine aminopeptidase 2-2 (431 aa).

Positions 1-76 (MAAQASEKLQ…PPRVPLSTLF (76 aa)) are disordered. The segment covering 35-47 (EAEDDSDDDEVED) has biased composition (acidic residues). Substrate is bound at residue histidine 184. Aspartate 204, aspartate 215, and histidine 284 together coordinate a divalent metal cation. Substrate is bound at residue histidine 292. 2 residues coordinate a divalent metal cation: glutamate 317 and glutamate 412.

The protein belongs to the peptidase M24A family. Methionine aminopeptidase eukaryotic type 2 subfamily. The cofactor is Co(2+). Zn(2+) is required as a cofactor. Requires Mn(2+) as cofactor. It depends on Fe(2+) as a cofactor.

The protein resides in the cytoplasm. The enzyme catalyses Release of N-terminal amino acids, preferentially methionine, from peptides and arylamides.. Its function is as follows. Cotranslationally removes the N-terminal methionine from nascent proteins. The N-terminal methionine is often cleaved when the second residue in the primary sequence is small and uncharged (Met-Ala-, Cys, Gly, Pro, Ser, Thr, or Val). The protein is Methionine aminopeptidase 2-2 of Aspergillus niger (strain ATCC MYA-4892 / CBS 513.88 / FGSC A1513).